A 209-amino-acid chain; its full sequence is Thymidylate kinase (209 aa).

10-17 contacts ATP; that stretch reads GIDGCGKS.

It belongs to the thymidylate kinase family.

The catalysed reaction is dTMP + ATP = dTDP + ADP. Phosphorylation of dTMP to form dTDP in both de novo and salvage pathways of dTTP synthesis. The chain is Thymidylate kinase from Parasynechococcus marenigrum (strain WH8102).